Consider the following 688-residue polypeptide: Glycine--tRNA ligase beta subunit (688 aa).

It belongs to the class-II aminoacyl-tRNA synthetase family. In terms of assembly, tetramer of two alpha and two beta subunits.

It localises to the cytoplasm. It catalyses the reaction tRNA(Gly) + glycine + ATP = glycyl-tRNA(Gly) + AMP + diphosphate. This is Glycine--tRNA ligase beta subunit from Shewanella sp. (strain ANA-3).